A 21-amino-acid chain; its full sequence is Buforin-2 (21 aa).

The residue at position 21 (K21) is an N6-(2-hydroxyisobutyryl)lysine; alternate.

Belongs to the histone H2A family. In terms of tissue distribution, expressed by the skin glands.

It is found in the secreted. Its function is as follows. Antimicrobial peptide with potent activity against some Gram-positive and Gram-negative bacteria. Does not permeabilize membrane, but internalizes into bacterial cells and alter specific gene expression involved in bacterial resistance mechanisms. Has the ability to agglutinate E.coli, and lipid vesicles. Shows a weak hemolytic activity, and is not cytotoxic to monocytes. The chain is Buforin-2 from Sphaenorhynchus lacteus (Orinoco lime treefrog).